The following is a 343-amino-acid chain: Mas-related G-protein coupled receptor member F (343 aa).

The Extracellular portion of the chain corresponds to Met-1–Pro-44. Asn-4 is a glycosylation site (N-linked (GlcNAc...) asparagine). Residues Ala-45–Leu-66 form a helical membrane-spanning segment. Over Trp-67–Phe-82 the chain is Cytoplasmic. A helical membrane pass occupies residues Leu-83–Met-104. Residues Gly-105–Gly-123 lie on the Extracellular side of the membrane. The helical transmembrane segment at Leu-124 to Ser-144 threads the bilayer. The Cytoplasmic segment spans residues Val-145–Ser-160. A helical membrane pass occupies residues Ala-161–Phe-181. Over Cys-182–Asp-198 the chain is Extracellular. Residues Ile-199–Leu-220 form a helical membrane-spanning segment. At Ile-221–Val-241 the chain is on the cytoplasmic side. Residues Leu-242–Trp-263 traverse the membrane as a helical segment. Residues Val-264–Glu-273 lie on the Extracellular side of the membrane. Residues Tyr-274 to Ala-294 form a helical membrane-spanning segment. At Gly-295 to Ser-343 the chain is on the cytoplasmic side. Residues Ala-318–Ser-343 are disordered. Residues Ala-324–Ser-343 show a composition bias toward polar residues.

Belongs to the G-protein coupled receptor 1 family. Mas subfamily.

It is found in the cell membrane. Its function is as follows. Orphan receptor. May bind to a neuropeptide and may regulate nociceptor function and/or development, including the sensation or modulation of pain. This chain is Mas-related G-protein coupled receptor member F (Mrgprf), found in Mus musculus (Mouse).